The sequence spans 762 residues: Ribosome-releasing factor 2, mitochondrial (762 aa).

Residues 1–35 constitute a mitochondrion transit peptide; it reads MLLSLTFPVLRGCTGHLVNRSLQAPRWRVTWKRSY. The 288-residue stretch at 54 to 341 folds into the tr-type G domain; sequence SKIRNIGIMA…AITAYLPAPN (288 aa). Residues 63–70, 127–131, and 181–184 contribute to the GTP site; these read AHIDAGKT, DTPGH, and NKMD.

This sequence belongs to the TRAFAC class translation factor GTPase superfamily. Classic translation factor GTPase family. EF-G/EF-2 subfamily.

It is found in the mitochondrion. The enzyme catalyses GTP + H2O = GDP + phosphate + H(+). Its function is as follows. Mitochondrial GTPase that mediates the disassembly of ribosomes from messenger RNA at the termination of mitochondrial protein biosynthesis. Acts in collaboration with mrrf. GTP hydrolysis follows the ribosome disassembly and probably occurs on the ribosome large subunit. Not involved in the GTP-dependent ribosomal translocation step during translation elongation. This chain is Ribosome-releasing factor 2, mitochondrial (gfm2), found in Danio rerio (Zebrafish).